Here is a 219-residue protein sequence, read N- to C-terminus: Small ribosomal subunit protein uS2m (219 aa).

Belongs to the universal ribosomal protein uS2 family. Component of the mitochondrial ribosome small subunit.

It is found in the mitochondrion. The polypeptide is Small ribosomal subunit protein uS2m (RPS2) (Arabidopsis thaliana (Mouse-ear cress)).